We begin with the raw amino-acid sequence, 140 residues long: Actin-depolymerizing factor 10 (140 aa).

S6 bears the Phosphoserine mark. The ADF-H domain occupies 7–139 (GMHVSDECKL…SLDIIKGRVN (133 aa)).

This sequence belongs to the actin-binding proteins ADF family.

It is found in the cytoplasm. The protein localises to the cytoskeleton. Functionally, actin-depolymerizing protein. Severs actin filaments (F-actin) and binds to actin monomers. This chain is Actin-depolymerizing factor 10 (ADF10), found in Arabidopsis thaliana (Mouse-ear cress).